The following is a 216-amino-acid chain: Somatotropin (216 aa).

The first 26 residues, 1-26 (MAAGPRTSVLLAFTLLCLPWPQEAGA), serve as a signal peptide directing secretion. Histidine 45 contacts Zn(2+). Cysteine 78 and cysteine 189 are oxidised to a cystine. Serine 131 bears the Phosphoserine mark. Residue glutamate 198 coordinates Zn(2+). A disulfide bridge links cysteine 206 with cysteine 214.

It belongs to the somatotropin/prolactin family.

The protein resides in the secreted. In terms of biological role, plays an important role in growth control. Its major role in stimulating body growth is to stimulate the liver and other tissues to secrete IGF1. It stimulates both the differentiation and proliferation of myoblasts. It also stimulates amino acid uptake and protein synthesis in muscle and other tissues. This Camelus dromedarius (Dromedary) protein is Somatotropin (GH1).